Reading from the N-terminus, the 37-residue chain is Islet amyloid polypeptide (37 aa).

Cysteine 2 and cysteine 7 form a disulfide bridge. Residue tyrosine 37 is modified to Tyrosine amide.

Belongs to the calcitonin family. As to quaternary structure, can form homodimers. Interacts with IDE and INS. Interaction with INS inhibits homodimerization and fibril formation.

The protein resides in the secreted. Its function is as follows. Amylin/IAPP is a glucoregulatory peptide hormone that plays an important role in the regulation of energy homeostasis. Selectively inhibits insulin-stimulated glucose utilization and glycogen deposition in muscle, while not affecting adipocyte glucose metabolism. IAPP function is mediated by the CALCR-RAMPs (AMYRs) receptor complexes. Amylin can also bind CALCR receptor in the absence of RAMPs, although it is more selective for AMYRs. The protein is Islet amyloid polypeptide (IAPP) of Cricetulus griseus (Chinese hamster).